The sequence spans 92 residues: Alpha-conotoxin-like Rt20.1 (92 aa).

The N-terminal stretch at 1 to 24 (MPKLEMMLLVLLILPLSYFSAAGG) is a signal peptide. A propeptide spanning residues 25–45 (QVVQGDLRSDVLARYLQRGDR) is cleaved from the precursor. Glu-49 is subject to 4-carboxyglutamate. Position 55 is a 4-hydroxyproline (Pro-55). 4 disulfide bridges follow: Cys-63–Cys-72, Cys-68–Cys-80, Cys-73–Cys-90, and Cys-78–Cys-92.

Belongs to the conotoxin D superfamily. In terms of assembly, hetero-, homo- or pseudo-homodimer (identical sequence, different post-translational modifications). Expressed by the venom duct.

Its subcellular location is the secreted. In terms of biological role, alpha-conotoxins act on postsynaptic membranes, they bind to the nicotinic acetylcholine receptors (nAChR) and thus inhibit them. Through its two C-terminal domains, this homodimeric protein would bind to two nAChR allosteric sites, located outside the nAChR C-loop of the principal binding face and at the adjacent binding interface in a clockwise direction. This toxin specifically blocks mammalian neuronal nAChR of the alpha-7/CHRNA7, alpha-3-beta-2/CHRNA3-CHRNB2 and alpha-4-beta-2/CHRNA4-CHRNB2 subtypes. This chain is Alpha-conotoxin-like Rt20.1, found in Conus rattus (Rat cone).